The primary structure comprises 444 residues: Shufflon protein B' (444 aa).

The constant region stretch occupies residues 1–361; it reads MKKYDRGWAS…TGAILSCQSG (361 aa). Residues 362–444 form a variable region region; that stretch reads TWRKVGSGEL…GSITVYAICQ (83 aa).

The protein is Shufflon protein B' of Escherichia coli.